Reading from the N-terminus, the 547-residue chain is MRQKRKGDLSPAQLMMLTIGDVIKQLIEAHEQGKDIDLNKVKTRTAAKYGLSAQPRLVDIIAAVPPQYRKVLVPKLKAKPIRTASGIAVVAVMCKPHRCPHISFTGNICVYCPGGPDSDFEYSTQSYTGYEPTSMRAIRARYDPYLQTRHRIEQLKQLGHSVDKVEFIVMGGTFMALPEEYRDYFIRNLHDALSGHTSNNIYEAVKYSERSLTKCIGITIETRPDYCMKRHLSDMLTYGCTRLEIGVQSVYEDVARDTNRGHTVKAVCESFHLAKDSGFKVVAHMMPDLPNVGLERDIEQFTEFFENPAFRPDGLKLYPTLVIRGTGLYELWKSGRYKSYSPSDLIELVARILALVPPWTRVYRVQRDIPMPLVSSGVEHGNLRELAFARMKDLGIQCRDVRTREVGIQEIHHKVRPYQVELVRRDYVANGGWETFLSYEDPDQDILIGLLRLRKCSEETFRFELVGGVSIVRELHVYGSVVPVSSRDPTKFQHQGFGMLLMEEAERIAREEHGSGKIAVISGVGTRNYYRKIGYRLQGPYMVKTLE.

A Radical SAM core domain is found at 82–372; that stretch reads RTASGIAVVA…YRVQRDIPMP (291 aa). Residues Cys-99, Cys-109, and Cys-112 each coordinate [4Fe-4S] cluster. A Phosphoserine modification is found at Ser-161. Lys-164 lines the acetyl-CoA pocket. Tyr-202 is modified (phosphotyrosine). The residue at position 229 (Lys-229) is an N6-methyllysine. Tyr-251 carries the phosphotyrosine modification. The 152-residue stretch at 396–547 folds into the N-acetyltransferase domain; the sequence is IQCRDVRTRE…QGPYMVKTLE (152 aa). Acetyl-CoA is bound by residues 474-477, 497-499, and Tyr-530; these read ELHV and FGM.

Belongs to the ELP3 family. Component of the elongator complex which consists of ELP1, ELP2, ELP3, ELP4, ELP5 and ELP6. ELP1, ELP2 and ELP3 form the elongator core complex. Interacts with alpha-tubulin. Requires [4Fe-4S] cluster as cofactor. Tyrosine-phosphorylated; phosphorylation on Tyr-202 does not affect elongator complex integrity or ELP3 protein stability. Also serine/threonine-phosphorylated.

The protein localises to the cytoplasm. The protein resides in the nucleus. The enzyme catalyses uridine(34) in tRNA + acetyl-CoA + S-adenosyl-L-methionine + H2O = 5-(carboxymethyl)uridine(34) in tRNA + 5'-deoxyadenosine + L-methionine + CoA + 2 H(+). Its pathway is tRNA modification; 5-methoxycarbonylmethyl-2-thiouridine-tRNA biosynthesis. Functionally, catalytic tRNA acetyltransferase subunit of the elongator complex which is required for multiple tRNA modifications, including mcm5U (5-methoxycarbonylmethyl uridine), mcm5s2U (5-methoxycarbonylmethyl-2-thiouridine), and ncm5U (5-carbamoylmethyl uridine). In the elongator complex, acts as a tRNA uridine(34) acetyltransferase by mediating formation of carboxymethyluridine in the wobble base at position 34 in tRNAs. May also act as a protein lysine acetyltransferase by mediating acetylation of target proteins; such activity is however unclear in vivo and recent evidences suggest that ELP3 primarily acts as a tRNA acetyltransferase. Involved in neurogenesis: regulates the migration and branching of projection neurons in the developing cerebral cortex, through a process depending on alpha-tubulin acetylation. Required for acetylation of GJA1 in the developing cerebral cortex. The chain is Elongator complex protein 3 from Bos taurus (Bovine).